We begin with the raw amino-acid sequence, 428 residues long: Flotillin-2 (428 aa).

Gly-2 carries N-myristoyl glycine lipidation. Cys-4 is lipidated: S-palmitoyl cysteine; by ZDHHC5. A lipid anchor (S-palmitoyl cysteine) is attached at Cys-19. Cys-20 carries the S-palmitoyl cysteine; by ZDHHC5 lipid modification. Phosphoserine is present on Ser-405.

This sequence belongs to the band 7/mec-2 family. Flotillin subfamily. As to quaternary structure, heterooligomeric complex of flotillin-1 and flotillin-2 and caveolin-1 and caveolin-2. Interacts with ECPAS. Post-translationally, ZDHHC5-catalyzed palmitoylation may be required for the formation of higher-order complexes and for neurite outgrowth in cultured neural stem cells. In terms of tissue distribution, expressed in many tissues, including suprabasal epidermis, hair follicles, heart, lung, thymus, spleen, liver, kidney and brain. Not expressed in skeletal muscle.

It localises to the cell membrane. The protein localises to the membrane. The protein resides in the caveola. Its subcellular location is the endosome. Its function is as follows. May act as a scaffolding protein within caveolar membranes, functionally participating in formation of caveolae or caveolae-like vesicles. May be involved in epidermal cell adhesion and epidermal structure and function. The protein is Flotillin-2 (Flot2) of Mus musculus (Mouse).